Reading from the N-terminus, the 226-residue chain is Glycerol-3-phosphate acyltransferase (226 aa).

6 consecutive transmembrane segments (helical) span residues Met1–Phe21, Gly56–Val76, Leu102–Phe122, Ile134–Val154, Ile159–Leu178, and Leu182–Leu197.

It belongs to the PlsY family. Probably interacts with PlsX.

It localises to the cell inner membrane. It catalyses the reaction an acyl phosphate + sn-glycerol 3-phosphate = a 1-acyl-sn-glycero-3-phosphate + phosphate. Its pathway is lipid metabolism; phospholipid metabolism. In terms of biological role, catalyzes the transfer of an acyl group from acyl-phosphate (acyl-PO(4)) to glycerol-3-phosphate (G3P) to form lysophosphatidic acid (LPA). This enzyme utilizes acyl-phosphate as fatty acyl donor, but not acyl-CoA or acyl-ACP. The polypeptide is Glycerol-3-phosphate acyltransferase (Trichormus variabilis (strain ATCC 29413 / PCC 7937) (Anabaena variabilis)).